The following is a 719-amino-acid chain: Glycine--tRNA ligase beta subunit (719 aa).

Positions 65–84 are disordered; that stretch reads PDREEEIKGPPAKAAFKDGK.

It belongs to the class-II aminoacyl-tRNA synthetase family. Tetramer of two alpha and two beta subunits.

It is found in the cytoplasm. The enzyme catalyses tRNA(Gly) + glycine + ATP = glycyl-tRNA(Gly) + AMP + diphosphate. The sequence is that of Glycine--tRNA ligase beta subunit from Trichodesmium erythraeum (strain IMS101).